Here is a 168-residue protein sequence, read N- to C-terminus: G/U mismatch-specific DNA glycosylase (168 aa).

Belongs to the uracil-DNA glycosylase (UDG) superfamily. TDG/mug family. As to quaternary structure, binds DNA as a monomer.

The protein localises to the cytoplasm. The catalysed reaction is Specifically hydrolyzes mismatched double-stranded DNA and polynucleotides, releasing free uracil.. Excises ethenocytosine and uracil, which can arise by alkylation or deamination of cytosine, respectively, from the corresponding mispairs with guanine in ds-DNA. It is capable of hydrolyzing the carbon-nitrogen bond between the sugar-phosphate backbone of the DNA and the mispaired base. The complementary strand guanine functions in substrate recognition. Required for DNA damage lesion repair in stationary-phase cells. This Salmonella choleraesuis (strain SC-B67) protein is G/U mismatch-specific DNA glycosylase.